Consider the following 644-residue polypeptide: uncharacterized protein (644 aa).

The tract at residues Asp-65–Asn-117 is disordered. Acidic residues predominate over residues His-89–Val-114.

This is an uncharacterized protein from Arabidopsis thaliana (Mouse-ear cress).